A 414-amino-acid polypeptide reads, in one-letter code: Isocitrate dehydrogenase [NADP] cytoplasmic (414 aa).

Residue serine 2 is modified to N-acetylserine. Phosphotyrosine is present on tyrosine 42. Residue 75–77 coordinates NADP(+); that stretch reads TIT. Substrate is bound at residue threonine 77. At lysine 81 the chain carries N6-acetyllysine. Arginine 82 serves as a coordination point for NADP(+). Substrate-binding positions include 94 to 100 and arginine 109; that span reads SPNGTIR. Lysine 126 is subject to N6-succinyllysine. Substrate-binding residues include arginine 132 and lysine 212. N6-acetyllysine is present on residues lysine 224, lysine 233, and lysine 243. Aspartate 252 serves as a coordination point for Mn(2+). Lysine 260 is a binding site for NADP(+). Mn(2+) is bound by residues aspartate 275 and aspartate 279. 310 to 315 is a binding site for NADP(+); the sequence is GTVTRH. Lysine 321 is modified (N6-acetyllysine). NADP(+) is bound at residue asparagine 328. Serine 389 carries the phosphoserine modification. Position 400 is an N6-succinyllysine (lysine 400).

It belongs to the isocitrate and isopropylmalate dehydrogenases family. Homodimer. Mg(2+) serves as cofactor. It depends on Mn(2+) as a cofactor. In terms of processing, acetylation at Lys-374 dramatically reduces catalytic activity.

The protein resides in the cytoplasm. It localises to the cytosol. The enzyme catalyses D-threo-isocitrate + NADP(+) = 2-oxoglutarate + CO2 + NADPH. Functionally, catalyzes the NADP(+)-dependent oxidative decarboxylation of isocitrate (D-threo-isocitrate) to 2-ketoglutarate (2-oxoglutarate), which is required by other enzymes such as the phytanoyl-CoA dioxygenase. Plays a critical role in the generation of NADPH, an important cofactor in many biosynthesis pathways. May act as a corneal epithelial crystallin and may be involved in maintaining corneal epithelial transparency. The polypeptide is Isocitrate dehydrogenase [NADP] cytoplasmic (IDH1) (Pongo abelii (Sumatran orangutan)).